Here is a 651-residue protein sequence, read N- to C-terminus: MSESTPEVSSSYPPPAHFAEHANARAELYREAEEDRLAFWAKQANRLSWTTPFTEVLDWSGAPFAKWFVGGELNVAYNCVDRHVEAGHGDRVAIHWEGEPVGDRRTLTYSDLLAEVSKAANALTDLGLVAGDRVAIYLPLIPEAVIAMLACARLGIMHSVVFGGFTAAALQARIVDAQAKLLITADGQFRRGKPSPLKAAADEALAAIPDCSVEHVLVVRRTGIEMAWSEGRDLWWHHVVGSASPAHTPEPFDSEHPLFLLYTSGTTGKPKGIMHTSGGYLTQCCYTMRTIFDVKPDSDVFWCTADIGWVTGHTYGVYGPLCNGVTEVLYEGTPDTPDRHRHFQIIEKYGVTIYYTAPTLIRMFMKWGREIPDSHDLSSLRLLGSVGEPINPEAWRWYRDVIGGGRTPLVDTWWQTETGSAMISPLPGIAAAKPGSAMTPLPGISAKIVDDHGDPLPPHTEGAQHVTGYLVLDQPWPSMLRGIWGDPARYWHSYWSKFSDKGYYFAGDGARIDPDGAIWVLGRIDDVMNVSGHRISTAEVESALVAHSGVAEAAVVGVTDETTTQAICAFVVLRANYAPHDRTAEELRTEVARVISPIARPRDVHVVPELPKTRSGKIMRRLLRDVAENRELGDTSTLLDPTVFDAIRAAK.

CoA contacts are provided by residues 190-193 (RRGK) and Thr311. ATP-binding positions include 387-389 (GEP), 411-416 (DTWWQT), Asp508, and Arg523. Ser531 is a CoA binding site. Arg534 contributes to the ATP binding site. Positions 545, 547, and 550 each coordinate Mg(2+). An N6-acetyllysine modification is found at Lys617.

It belongs to the ATP-dependent AMP-binding enzyme family. Requires Mg(2+) as cofactor. In terms of processing, acetylated. Deacetylation by the SIR2-homolog deacetylase activates the enzyme.

It carries out the reaction acetate + ATP + CoA = acetyl-CoA + AMP + diphosphate. Catalyzes the conversion of acetate into acetyl-CoA (AcCoA), an essential intermediate at the junction of anabolic and catabolic pathways. AcsA undergoes a two-step reaction. In the first half reaction, AcsA combines acetate with ATP to form acetyl-adenylate (AcAMP) intermediate. In the second half reaction, it can then transfer the acetyl group from AcAMP to the sulfhydryl group of CoA, forming the product AcCoA. M.tuberculosis may use AcsA for both acetate and propionate assimilation. In Mycobacterium tuberculosis (strain CDC 1551 / Oshkosh), this protein is Acetyl-coenzyme A synthetase.